We begin with the raw amino-acid sequence, 292 residues long: Homeobox-leucine zipper protein HOX19 (292 aa).

3 disordered regions span residues 14 to 85, 99 to 133, and 217 to 236; these read LALG…HSVS, RERAEEADGERVSSTAAGRDDDDDGSTRKKLRLTK, and FAPPPPSSAAHQPSPAPPAP. The span at 28 to 74 shows a compositional bias: low complexity; that stretch reads TDAAAAHRGGCRRPSPSSQCPPLEPSLTLSLPDDAAAGAAATATATA. Residues 99–109 are compositionally biased toward basic and acidic residues; sequence RERAEEADGER. Positions 124-183 form a DNA-binding region, homeobox; that stretch reads STRKKLRLTKEQSALLEDRFREHSTLNPKQKVALAKQLNLRPRQVEVWFQNRRARTKLKQ. The leucine-zipper stretch occupies residues 182–226; it reads KQTEVDCEFLKRCCETLTEENRRLQRELQELRALKFAPPPPSSAA.

The protein belongs to the HD-ZIP homeobox family. Class II subfamily. Expressed in seedlings, roots, stems, leaf sheaths and blades and panicles.

It localises to the nucleus. Functionally, probable transcription factor. The polypeptide is Homeobox-leucine zipper protein HOX19 (HOX19) (Oryza sativa subsp. japonica (Rice)).